Here is an 85-residue protein sequence, read N- to C-terminus: uncharacterized protein (85 aa).

This sequence to A.fulgidus AF_0255 and AF_1363.

This is an uncharacterized protein from Archaeoglobus fulgidus (strain ATCC 49558 / DSM 4304 / JCM 9628 / NBRC 100126 / VC-16).